Consider the following 691-residue polypeptide: DNA ligase (691 aa).

NAD(+) is bound by residues 41–45 (DAEYD), 90–91 (SL), and Glu130. Catalysis depends on Lys132, which acts as the N6-AMP-lysine intermediate. The NAD(+) site is built by Arg153, Glu190, Lys307, and Lys331. Zn(2+)-binding residues include Cys425, Cys428, Cys443, and Cys449. The BRCT domain occupies 610 to 691 (APQGVLAGKT…MHKLLEGHAR (82 aa)).

The protein belongs to the NAD-dependent DNA ligase family. LigA subfamily. Mg(2+) is required as a cofactor. Mn(2+) serves as cofactor.

It catalyses the reaction NAD(+) + (deoxyribonucleotide)n-3'-hydroxyl + 5'-phospho-(deoxyribonucleotide)m = (deoxyribonucleotide)n+m + AMP + beta-nicotinamide D-nucleotide.. Functionally, DNA ligase that catalyzes the formation of phosphodiester linkages between 5'-phosphoryl and 3'-hydroxyl groups in double-stranded DNA using NAD as a coenzyme and as the energy source for the reaction. It is essential for DNA replication and repair of damaged DNA. The sequence is that of DNA ligase from Burkholderia thailandensis (strain ATCC 700388 / DSM 13276 / CCUG 48851 / CIP 106301 / E264).